The chain runs to 227 residues: Octanoyltransferase (227 aa).

One can recognise a BPL/LPL catalytic domain in the interval 34 to 212 (RQREDGLMLL…AFAEVFPVTW (179 aa)). Residues 76-83 (RGGEVTYH), 143-145 (AIA), and 156-158 (GFA) each bind substrate. Cys174 (acyl-thioester intermediate) is an active-site residue.

The protein belongs to the LipB family.

The protein resides in the cytoplasm. The enzyme catalyses octanoyl-[ACP] + L-lysyl-[protein] = N(6)-octanoyl-L-lysyl-[protein] + holo-[ACP] + H(+). Its pathway is protein modification; protein lipoylation via endogenous pathway; protein N(6)-(lipoyl)lysine from octanoyl-[acyl-carrier-protein]: step 1/2. Catalyzes the transfer of endogenously produced octanoic acid from octanoyl-acyl-carrier-protein onto the lipoyl domains of lipoate-dependent enzymes. Lipoyl-ACP can also act as a substrate although octanoyl-ACP is likely to be the physiological substrate. This chain is Octanoyltransferase, found in Synechocystis sp. (strain ATCC 27184 / PCC 6803 / Kazusa).